The sequence spans 379 residues: Queuine tRNA-ribosyltransferase (379 aa).

The Proton acceptor role is filled by aspartate 89. Substrate is bound by residues 89–93, aspartate 143, glutamine 187, and glycine 214; that span reads DSGGF. An RNA binding region spans residues 245–251; sequence GVGKPED. Aspartate 264 (nucleophile) is an active-site residue. An RNA binding; important for wobble base 34 recognition region spans residues 269-273; sequence TRNAR. The Zn(2+) site is built by cysteine 302, cysteine 304, cysteine 307, and histidine 333.

Belongs to the queuine tRNA-ribosyltransferase family. As to quaternary structure, homodimer. Within each dimer, one monomer is responsible for RNA recognition and catalysis, while the other monomer binds to the replacement base PreQ1. Zn(2+) is required as a cofactor.

The enzyme catalyses 7-aminomethyl-7-carbaguanine + guanosine(34) in tRNA = 7-aminomethyl-7-carbaguanosine(34) in tRNA + guanine. It participates in tRNA modification; tRNA-queuosine biosynthesis. Its function is as follows. Catalyzes the base-exchange of a guanine (G) residue with the queuine precursor 7-aminomethyl-7-deazaguanine (PreQ1) at position 34 (anticodon wobble position) in tRNAs with GU(N) anticodons (tRNA-Asp, -Asn, -His and -Tyr). Catalysis occurs through a double-displacement mechanism. The nucleophile active site attacks the C1' of nucleotide 34 to detach the guanine base from the RNA, forming a covalent enzyme-RNA intermediate. The proton acceptor active site deprotonates the incoming PreQ1, allowing a nucleophilic attack on the C1' of the ribose to form the product. After dissociation, two additional enzymatic reactions on the tRNA convert PreQ1 to queuine (Q), resulting in the hypermodified nucleoside queuosine (7-(((4,5-cis-dihydroxy-2-cyclopenten-1-yl)amino)methyl)-7-deazaguanosine). The chain is Queuine tRNA-ribosyltransferase from Edwardsiella ictaluri (strain 93-146).